A 325-amino-acid chain; its full sequence is Eukaryotic translation initiation factor 3 subunit I (325 aa).

5 WD repeats span residues 8–47 (GHERSITQIKYNREGDLLFSVAKDPIANVWYSVNGERLGT), 50–89 (GHTGAVWCVDVDWDTKNVLTGSADNSCRLWDCETGKQLAL), 144–183 (CSESKITSAVWGPLGEFVIAGHENGEINQFSAKSGEVLKK), 186–225 (EHTKQINDIQSSVDLTMIISASKDCTAKMFDSSTLEHVKT), and 283–324 (GHFG…FELE).

It belongs to the eIF-3 subunit I family. In terms of assembly, component of the eukaryotic translation initiation factor 3 (eIF-3) complex, which is composed of 13 subunits: eif3a, eif3b, eif3c, eif3d, eif3e, eif3f, eif3g, eif3h, eif3i, eif3j, eif3k, eif3l and eif3m.

Its subcellular location is the cytoplasm. Component of the eukaryotic translation initiation factor 3 (eIF-3) complex, which is involved in protein synthesis of a specialized repertoire of mRNAs and, together with other initiation factors, stimulates binding of mRNA and methionyl-tRNAi to the 40S ribosome. The eIF-3 complex specifically targets and initiates translation of a subset of mRNAs involved in cell proliferation. In Danio rerio (Zebrafish), this protein is Eukaryotic translation initiation factor 3 subunit I (eif3i).